We begin with the raw amino-acid sequence, 42 residues long: Alpha-lactalbumin I (42 aa).

In terms of domain architecture, C-type lysozyme spans 1–42 (IDYRKCQASQILKEHGMDKVIPLPELVCTMFHISGLSPQAEV).

Belongs to the glycosyl hydrolase 22 family. As to quaternary structure, lactose synthase (LS) is a heterodimer of a catalytic component, beta1,4-galactosyltransferase (beta4Gal-T1) and a regulatory component, alpha-lactalbumin (LA). As to expression, mammary gland specific. Secreted in milk.

It is found in the secreted. Regulatory subunit of lactose synthase, changes the substrate specificity of galactosyltransferase in the mammary gland making glucose a good acceptor substrate for this enzyme. This enables LS to synthesize lactose, the major carbohydrate component of milk. In other tissues, galactosyltransferase transfers galactose onto the N-acetylglucosamine of the oligosaccharide chains in glycoproteins. The polypeptide is Alpha-lactalbumin I (LALBA) (Macropus giganteus (Eastern gray kangaroo)).